Reading from the N-terminus, the 109-residue chain is MEMPNLGDMMKQIQQAGAKMQDVQKQLEKTVTHGEAGGGMVKVSVNGRQRLLSLAIDPDIMDDREMVQDLVLAAVNSAIEESGRVSQEEIAKVAGGMINPADILKNMGK.

Belongs to the YbaB/EbfC family. In terms of assembly, homodimer.

The protein localises to the cytoplasm. It localises to the nucleoid. Functionally, binds to DNA and alters its conformation. May be involved in regulation of gene expression, nucleoid organization and DNA protection. In Chlorobium phaeovibrioides (strain DSM 265 / 1930) (Prosthecochloris vibrioformis (strain DSM 265)), this protein is Nucleoid-associated protein Cvib_1034.